Reading from the N-terminus, the 356-residue chain is Tyrosine recombinase XerS (356 aa).

One can recognise a Core-binding (CB) domain in the interval 16 to 121 (LMPWYVLEYY…ALSSLYKYLT (106 aa)). The 186-residue stretch at 169–354 (GFLTYIDQEH…VNDEQKNALD (186 aa)) folds into the Tyr recombinase domain. Active-site residues include R210, K234, H306, R309, and H332. Y341 acts as the O-(3'-phospho-DNA)-tyrosine intermediate in catalysis.

The protein belongs to the 'phage' integrase family. XerS subfamily.

The protein localises to the cytoplasm. Its activity is regulated as follows. FtsK is required for recombination. Its function is as follows. Site-specific tyrosine recombinase, which acts by catalyzing the cutting and rejoining of the recombining DNA molecules. Essential to convert dimers of the bacterial chromosome into monomers to permit their segregation at cell division. This chain is Tyrosine recombinase XerS, found in Streptococcus pneumoniae serotype 2 (strain D39 / NCTC 7466).